The primary structure comprises 189 residues: Small ribosomal subunit protein uS5 (189 aa).

The S5 DRBM domain maps to 22–85 (FVDKLVAINR…EAAKRDLIFV (64 aa)).

This sequence belongs to the universal ribosomal protein uS5 family. In terms of assembly, part of the 30S ribosomal subunit. Contacts proteins S4 and S8.

With S4 and S12 plays an important role in translational accuracy. Functionally, located at the back of the 30S subunit body where it stabilizes the conformation of the head with respect to the body. This chain is Small ribosomal subunit protein uS5, found in Sinorhizobium medicae (strain WSM419) (Ensifer medicae).